Here is a 387-residue protein sequence, read N- to C-terminus: F-box protein DOR (387 aa).

One can recognise an F-box domain in the interval 19–64 (DENFEPIPIDLVIEIFSRSPVKSIARCRCVSKLWASILRLPYFTEL).

Part of a SCF (ASK-cullin-F-box) protein ligase complex. Interacts with ASK14 and CUL1. Strongly expressed in guard cells. Mostly represented in seedlings, leaves and flowers, and, to a lower extent, in roots and siliques.

The protein operates within protein modification; protein ubiquitination. In terms of biological role, component of SCF(ASK-cullin-F-box) E3 ubiquitin ligase complexes, which may mediate the ubiquitination and subsequent proteasomal degradation of target proteins. Negative regulator of guard cell abscisic acid (ABA) signaling, especially during drought stress. The polypeptide is F-box protein DOR (DOR) (Arabidopsis thaliana (Mouse-ear cress)).